Here is a 605-residue protein sequence, read N- to C-terminus: Elongation factor 4 (605 aa).

Positions 4 to 186 (SSVRNFCIIA…AIVNKVPAPK (183 aa)) constitute a tr-type G domain. GTP contacts are provided by residues 16-21 (DHGKST) and 133-136 (NKID).

The protein belongs to the TRAFAC class translation factor GTPase superfamily. Classic translation factor GTPase family. LepA subfamily.

It is found in the cell membrane. The enzyme catalyses GTP + H2O = GDP + phosphate + H(+). Its function is as follows. Required for accurate and efficient protein synthesis under certain stress conditions. May act as a fidelity factor of the translation reaction, by catalyzing a one-codon backward translocation of tRNAs on improperly translocated ribosomes. Back-translocation proceeds from a post-translocation (POST) complex to a pre-translocation (PRE) complex, thus giving elongation factor G a second chance to translocate the tRNAs correctly. Binds to ribosomes in a GTP-dependent manner. The protein is Elongation factor 4 of Dehalococcoides mccartyi (strain ATCC BAA-2100 / JCM 16839 / KCTC 5957 / BAV1).